The primary structure comprises 239 residues: Ribose-5-phosphate isomerase A (239 aa).

Substrate-binding positions include 30–33, 87–90, and 100–103; these read SGST, DGAD, and KGGG. The active-site Proton acceptor is E109. K127 contacts substrate.

It belongs to the ribose 5-phosphate isomerase family. As to quaternary structure, homodimer.

It carries out the reaction aldehydo-D-ribose 5-phosphate = D-ribulose 5-phosphate. Its pathway is carbohydrate degradation; pentose phosphate pathway; D-ribose 5-phosphate from D-ribulose 5-phosphate (non-oxidative stage): step 1/1. Its function is as follows. Catalyzes the reversible conversion of ribose-5-phosphate to ribulose 5-phosphate. The protein is Ribose-5-phosphate isomerase A of Synechococcus sp. (strain CC9605).